Reading from the N-terminus, the 590-residue chain is Sulfoacetaldehyde acetyltransferase (590 aa).

The protein belongs to the TPP enzyme family. Requires Mg(2+) as cofactor. It depends on thiamine diphosphate as a cofactor.

It is found in the cytoplasm. It carries out the reaction acetyl phosphate + sulfite + H(+) = sulfoacetaldehyde + phosphate. It participates in organosulfur degradation; taurine degradation via aerobic pathway; acetyl phosphate and sulfite from taurine: step 2/2. The protein is Sulfoacetaldehyde acetyltransferase of Rhodobacter capsulatus (strain ATCC BAA-309 / NBRC 16581 / SB1003).